The chain runs to 278 residues: uncharacterized protein (278 aa).

10 helical membrane passes run M1 to Y21, A30 to L50, V56 to I76, I92 to Y112, L116 to G136, L146 to L166, L170 to T190, G209 to W229, N230 to L250, and L258 to Q278. EamA domains are found at residues I12–G136 and F154–L274.

It belongs to the EamA transporter family.

It is found in the cell membrane. This is an uncharacterized protein from Archaeoglobus fulgidus (strain ATCC 49558 / DSM 4304 / JCM 9628 / NBRC 100126 / VC-16).